A 491-amino-acid polypeptide reads, in one-letter code: Ketol-acid reductoisomerase (NADP(+)) (491 aa).

The KARI N-terminal Rossmann domain maps to Ala-15–Ser-208. NADP(+) is bound by residues Cys-45–Gln-48, Arg-68, Arg-76, Ser-78, and Asp-108–Gln-110. His-132 is an active-site residue. An NADP(+)-binding site is contributed by Gly-158. KARI C-terminal knotted domains are found at residues Ser-209–Gln-344 and Phe-345–Met-484. Residues Asp-217, Glu-221, Glu-389, and Glu-393 each contribute to the Mg(2+) site. Ser-414 is a binding site for substrate.

It belongs to the ketol-acid reductoisomerase family. Requires Mg(2+) as cofactor.

It catalyses the reaction (2R)-2,3-dihydroxy-3-methylbutanoate + NADP(+) = (2S)-2-acetolactate + NADPH + H(+). The enzyme catalyses (2R,3R)-2,3-dihydroxy-3-methylpentanoate + NADP(+) = (S)-2-ethyl-2-hydroxy-3-oxobutanoate + NADPH + H(+). The protein operates within amino-acid biosynthesis; L-isoleucine biosynthesis; L-isoleucine from 2-oxobutanoate: step 2/4. Its pathway is amino-acid biosynthesis; L-valine biosynthesis; L-valine from pyruvate: step 2/4. In terms of biological role, involved in the biosynthesis of branched-chain amino acids (BCAA). Catalyzes an alkyl-migration followed by a ketol-acid reduction of (S)-2-acetolactate (S2AL) to yield (R)-2,3-dihydroxy-isovalerate. In the isomerase reaction, S2AL is rearranged via a Mg-dependent methyl migration to produce 3-hydroxy-3-methyl-2-ketobutyrate (HMKB). In the reductase reaction, this 2-ketoacid undergoes a metal-dependent reduction by NADPH to yield (R)-2,3-dihydroxy-isovalerate. The protein is Ketol-acid reductoisomerase (NADP(+)) of Salmonella agona (strain SL483).